The following is a 92-amino-acid chain: MARKCEITGKKTMFGNNVPRKGLAKKKGGAGQHIGVKTKRTFKVNLINKKFFIPNLGRSVSIKVSANALRSISKIGLDAFLKKNCKKIENFL.

This sequence belongs to the bacterial ribosomal protein bL28 family.

This chain is Large ribosomal subunit protein bL28, found in Borreliella burgdorferi (strain ATCC 35210 / DSM 4680 / CIP 102532 / B31) (Borrelia burgdorferi).